Consider the following 302-residue polypeptide: Oxygen-dependent coproporphyrinogen-III oxidase (302 aa).

S90 contacts substrate. Residues H94 and H104 each contribute to the a divalent metal cation site. The active-site Proton donor is H104. A substrate-binding site is contributed by 106-108; the sequence is NVR. A divalent metal cation-binding residues include H143 and H173. Residues 238-273 form an important for dimerization region; the sequence is YVEFNLIYDRGTIFGLQSNGRTESILLSMPPIVKWR.

It belongs to the aerobic coproporphyrinogen-III oxidase family. In terms of assembly, homodimer. A divalent metal cation serves as cofactor.

The protein localises to the cytoplasm. The enzyme catalyses coproporphyrinogen III + O2 + 2 H(+) = protoporphyrinogen IX + 2 CO2 + 2 H2O. The protein operates within porphyrin-containing compound metabolism; protoporphyrin-IX biosynthesis; protoporphyrinogen-IX from coproporphyrinogen-III (O2 route): step 1/1. Its function is as follows. Involved in the heme biosynthesis. Catalyzes the aerobic oxidative decarboxylation of propionate groups of rings A and B of coproporphyrinogen-III to yield the vinyl groups in protoporphyrinogen-IX. The chain is Oxygen-dependent coproporphyrinogen-III oxidase from Methylobacillus flagellatus (strain ATCC 51484 / DSM 6875 / VKM B-1610 / KT).